The primary structure comprises 374 residues: Methylthioribose-1-phosphate isomerase (374 aa).

Residue Asp-256 is the Proton donor of the active site.

It belongs to the eIF-2B alpha/beta/delta subunits family. MtnA subfamily.

It is found in the cytoplasm. The protein localises to the nucleus. The enzyme catalyses 5-(methylsulfanyl)-alpha-D-ribose 1-phosphate = 5-(methylsulfanyl)-D-ribulose 1-phosphate. The protein operates within amino-acid biosynthesis; L-methionine biosynthesis via salvage pathway; L-methionine from S-methyl-5-thio-alpha-D-ribose 1-phosphate: step 1/6. Functionally, catalyzes the interconversion of methylthioribose-1-phosphate (MTR-1-P) into methylthioribulose-1-phosphate (MTRu-1-P). The protein is Methylthioribose-1-phosphate isomerase of Leishmania braziliensis.